We begin with the raw amino-acid sequence, 422 residues long: MIIKRTPQAASPLASWLSYLENLHSKTIDLGLERVSLVAARLGVLKPAPFVFTVAGTNGKGTTCRTLESILMAAGYKVGVYSSPHLVRYTERVRVQGQELPESAHTASFAEIESARGDISLTYFEYGTLSALWLFKQAQLDVVILEVGLGGRLDATNIVDADVAVVTSIALDHTDWLGPDRESIGREKAGIFRSEKPAIVGEPEMPSTIADVAQEKGALLQRRGVEWNYSVTDHDWAFSDAHGTLENLPLPLVPQPNAATALAALRASGLEVSENAIRDGIASAILPGRFQIVSESPRVIFDVAHNPHAAEYLTGRMKALPKNGRVLAVIGMLHDKDIAGTLAWLKSVVDDWYCAPLEGPRGATAEQLLEHLGNGKSFDSVAQAWDAAMADAKAEDTVLVCGSFHTVAHVMEVIDARRSGGK.

29-31 contacts 7,8-dihydropteroate; that stretch reads DLG. Residue 59–62 participates in ATP binding; the sequence is GKGT. A Mg(2+)-binding site is contributed by serine 83. 122–125 provides a ligand contact to 7,8-dihydropteroate; that stretch reads TYFE. Glutamate 146 contributes to the Mg(2+) binding site. 153–155 contacts 7,8-dihydropteroate; sequence LDA. Position 173 (histidine 173) interacts with Mg(2+). Position 188 is an N6-carboxylysine (lysine 188). Residues asparagine 257, arginine 289, and aspartate 302 each contribute to the ATP site.

Belongs to the folylpolyglutamate synthase family. As to quaternary structure, monomer. Mg(2+) serves as cofactor.

The catalysed reaction is 7,8-dihydropteroate + L-glutamate + ATP = 7,8-dihydrofolate + ADP + phosphate + H(+). It catalyses the reaction (6S)-5,6,7,8-tetrahydrofolyl-(gamma-L-Glu)(n) + L-glutamate + ATP = (6S)-5,6,7,8-tetrahydrofolyl-(gamma-L-Glu)(n+1) + ADP + phosphate + H(+). It carries out the reaction 10-formyltetrahydrofolyl-(gamma-L-Glu)(n) + L-glutamate + ATP = 10-formyltetrahydrofolyl-(gamma-L-Glu)(n+1) + ADP + phosphate + H(+). The enzyme catalyses (6R)-5,10-methylenetetrahydrofolyl-(gamma-L-Glu)(n) + L-glutamate + ATP = (6R)-5,10-methylenetetrahydrofolyl-(gamma-L-Glu)(n+1) + ADP + phosphate + H(+). It participates in cofactor biosynthesis; tetrahydrofolate biosynthesis; 7,8-dihydrofolate from 2-amino-4-hydroxy-6-hydroxymethyl-7,8-dihydropteridine diphosphate and 4-aminobenzoate: step 2/2. It functions in the pathway cofactor biosynthesis; tetrahydrofolylpolyglutamate biosynthesis. Its function is as follows. Functions in two distinct reactions of the de novo folate biosynthetic pathway. Catalyzes the addition of a glutamate residue to dihydropteroate (7,8-dihydropteroate or H2Pte) to form dihydrofolate (7,8-dihydrofolate monoglutamate or H2Pte-Glu). Also catalyzes successive additions of L-glutamate to tetrahydrofolate or 10-formyltetrahydrofolate or 5,10-methylenetetrahydrofolate, leading to folylpolyglutamate derivatives. This Escherichia coli (strain K12) protein is Dihydrofolate synthase/folylpolyglutamate synthase.